Here is a 183-residue protein sequence, read N- to C-terminus: ATP synthase subunit b, chloroplastic (183 aa).

Residues 27–49 (LATNLINLTVVVGVLIFFGKGVL) traverse the membrane as a helical segment.

The protein belongs to the ATPase B chain family. In terms of assembly, F-type ATPases have 2 components, F(1) - the catalytic core - and F(0) - the membrane proton channel. F(1) has five subunits: alpha(3), beta(3), gamma(1), delta(1), epsilon(1). F(0) has four main subunits: a(1), b(1), b'(1) and c(10-14). The alpha and beta chains form an alternating ring which encloses part of the gamma chain. F(1) is attached to F(0) by a central stalk formed by the gamma and epsilon chains, while a peripheral stalk is formed by the delta, b and b' chains.

It is found in the plastid. The protein localises to the chloroplast thylakoid membrane. In terms of biological role, f(1)F(0) ATP synthase produces ATP from ADP in the presence of a proton or sodium gradient. F-type ATPases consist of two structural domains, F(1) containing the extramembraneous catalytic core and F(0) containing the membrane proton channel, linked together by a central stalk and a peripheral stalk. During catalysis, ATP synthesis in the catalytic domain of F(1) is coupled via a rotary mechanism of the central stalk subunits to proton translocation. Its function is as follows. Component of the F(0) channel, it forms part of the peripheral stalk, linking F(1) to F(0). The sequence is that of ATP synthase subunit b, chloroplastic from Lolium perenne (Perennial ryegrass).